We begin with the raw amino-acid sequence, 224 residues long: Cytosolic-abundant heat soluble protein 77580 (224 aa).

Low complexity predominate over residues 1–13 (MSNYQQESSYQYS). The disordered stretch occupies residues 1–38 (MSNYQQESSYQYSDRSNNGQQQEQQEKKEVEHSSYTHT). Residues 24 to 38 (QQEKKEVEHSSYTHT) are compositionally biased toward basic and acidic residues. Residues 83-191 (VIDTEAETEE…KRVLERSKFH (109 aa)) adopt a coiled-coil conformation. CAHS motif regions lie at residues 122-140 (YRKQ…LEKQ) and 159-177 (QKRQ…LERE). Residues 200 to 215 (AAAGSTHSGSSSVAVS) show a composition bias toward low complexity. The disordered stretch occupies residues 200–224 (AAAGSTHSGSSSVAVSESEKFQTNN).

This sequence belongs to the Cytosolic-abundant heat soluble protein (CAHS) family.

It is found in the cytoplasm. CAHS proteins are cytosolic heat soluble proteins that seem to contribute to the anhydrobiosis in tardigrades, but their specific mechanisms are yet to be identified. It is possible that protection during anhydrobiosis might occur via the stabilization of vitrifying small molecules such as sugars, but not via the direct glass transition of CAHS proteins themselves. The protein is Cytosolic-abundant heat soluble protein 77580 of Hypsibius exemplaris (Freshwater tardigrade).